A 145-amino-acid chain; its full sequence is Maximins 3/H9 type 1 (145 aa).

The first 18 residues, 1–18, serve as a signal peptide directing secretion; sequence MNFKYIVAVSFLIASAYA. 2 propeptides span residues 19–43 and 74–124; these read RSVQ…LREI and RTAE…KEKR. At Ile144 the chain carries Isoleucine amide.

The protein belongs to the bombinin family. As to expression, expressed by the skin glands.

Its subcellular location is the secreted. Its function is as follows. Maximin-3 shows antibacterial activity against both Gram-positive and Gram-negative bacteria. It also shows antimicrobial activity against the fungus C.albicans, but not against A.flavus nor P.uticale. It has little hemolytic activity. It possess a significant cytotoxicity against tumor cell lines. It possess a significant anti-HIV activity. It shows high spermicidal activity. Functionally, maximin-H9 shows antimicrobial activity against bacteria and against the fungus C.albicans. Shows strong hemolytic activity. This chain is Maximins 3/H9 type 1, found in Bombina maxima (Giant fire-bellied toad).